The following is a 284-amino-acid chain: Formamidopyrimidine-DNA glycosylase (284 aa).

Proline 2 acts as the Schiff-base intermediate with DNA in catalysis. The active-site Proton donor is glutamate 3. Lysine 58 functions as the Proton donor; for beta-elimination activity in the catalytic mechanism. 3 residues coordinate DNA: histidine 97, arginine 120, and arginine 165. Residues 250-284 (FVYDRAGEPCKVCGTPVRQIVQGQRSTFYCTHCQH) form an FPG-type zinc finger. Arginine 274 acts as the Proton donor; for delta-elimination activity in catalysis.

This sequence belongs to the FPG family. As to quaternary structure, monomer. It depends on Zn(2+) as a cofactor.

The enzyme catalyses Hydrolysis of DNA containing ring-opened 7-methylguanine residues, releasing 2,6-diamino-4-hydroxy-5-(N-methyl)formamidopyrimidine.. It catalyses the reaction 2'-deoxyribonucleotide-(2'-deoxyribose 5'-phosphate)-2'-deoxyribonucleotide-DNA = a 3'-end 2'-deoxyribonucleotide-(2,3-dehydro-2,3-deoxyribose 5'-phosphate)-DNA + a 5'-end 5'-phospho-2'-deoxyribonucleoside-DNA + H(+). In terms of biological role, involved in base excision repair of DNA damaged by oxidation or by mutagenic agents. Acts as a DNA glycosylase that recognizes and removes damaged bases. Has a preference for oxidized purines, such as 7,8-dihydro-8-oxoguanine (8-oxoG). Has AP (apurinic/apyrimidinic) lyase activity and introduces nicks in the DNA strand. Cleaves the DNA backbone by beta-delta elimination to generate a single-strand break at the site of the removed base with both 3'- and 5'-phosphates. The sequence is that of Formamidopyrimidine-DNA glycosylase from Cupriavidus pinatubonensis (strain JMP 134 / LMG 1197) (Cupriavidus necator (strain JMP 134)).